We begin with the raw amino-acid sequence, 199 residues long: Tumor necrosis factor ligand superfamily member 4 (199 aa).

The Cytoplasmic portion of the chain corresponds to 1 to 25 (MEGEGVQPPDENLENGSRPRFKWKK). A helical; Signal-anchor for type II membrane protein transmembrane segment spans residues 26 to 48 (VLRLVVSGIKAAGLLLCVVYVCL). The Extracellular portion of the chain corresponds to 49 to 199 (QFSSSPAKDS…YSSTVNQVPL (151 aa)). Residues 59 to 176 (PIQRLRAPVT…QINDGELIIV (118 aa)) form the THD domain. 2 disulfide bridges follow: cysteine 70–cysteine 163 and cysteine 98–cysteine 184. N-linked (GlcNAc...) asparagine glycans are attached at residues asparagine 91 and asparagine 157.

This sequence belongs to the tumor necrosis factor family. In terms of assembly, homotrimer. Detected in T-cell lines, but not in a macrophage cell line.

The protein resides in the membrane. Its function is as follows. Cytokine that binds to TNFRSF4. Co-stimulates T-cell proliferation and cytokine production. The protein is Tumor necrosis factor ligand superfamily member 4 (Tnfsf4) of Rattus norvegicus (Rat).